The chain runs to 196 residues: DnaA initiator-associating protein DiaA (196 aa).

Residues Leu34–Val196 form the SIS domain.

This sequence belongs to the SIS family. DiaA subfamily. As to quaternary structure, homotetramer; dimer of dimers.

In terms of biological role, required for the timely initiation of chromosomal replication via direct interactions with the DnaA initiator protein. The chain is DnaA initiator-associating protein DiaA from Escherichia coli O6:K15:H31 (strain 536 / UPEC).